The primary structure comprises 245 residues: tRNA1(Val) (adenine(37)-N6)-methyltransferase (245 aa).

The protein belongs to the methyltransferase superfamily. tRNA (adenine-N(6)-)-methyltransferase family.

The protein resides in the cytoplasm. The enzyme catalyses adenosine(37) in tRNA1(Val) + S-adenosyl-L-methionine = N(6)-methyladenosine(37) in tRNA1(Val) + S-adenosyl-L-homocysteine + H(+). Specifically methylates the adenine in position 37 of tRNA(1)(Val) (anticodon cmo5UAC). The protein is tRNA1(Val) (adenine(37)-N6)-methyltransferase of Escherichia fergusonii (strain ATCC 35469 / DSM 13698 / CCUG 18766 / IAM 14443 / JCM 21226 / LMG 7866 / NBRC 102419 / NCTC 12128 / CDC 0568-73).